A 332-amino-acid chain; its full sequence is NADH-quinone oxidoreductase subunit H (332 aa).

9 helical membrane-spanning segments follow: residues 4–24, 44–64, 78–98, 120–140, 165–185, 194–214, 255–275, 279–299, and 312–332; these read FAFFALEALIKCIIIIAIFAS, IGPDMVGPFGLIQLVADMIKL, FIFAIAPLISAICAFVSLAAI, VALLFVIGTSGLCFYAVFLGG, VGALALIAIVMLVGSFSLVDI, FSWLIFKQPLAFVLFIIALFI, IAGAILVTLLFLGGFNSFWII, IMMIVKSSFIFFWYFWARAAF, and YLILIPLAVLNLLITALAVLL.

This sequence belongs to the complex I subunit 1 family. As to quaternary structure, NDH-1 is composed of 14 different subunits. Subunits NuoA, H, J, K, L, M, N constitute the membrane sector of the complex.

It is found in the cell inner membrane. The catalysed reaction is a quinone + NADH + 5 H(+)(in) = a quinol + NAD(+) + 4 H(+)(out). NDH-1 shuttles electrons from NADH, via FMN and iron-sulfur (Fe-S) centers, to quinones in the respiratory chain. The immediate electron acceptor for the enzyme in this species is believed to be ubiquinone. Couples the redox reaction to proton translocation (for every two electrons transferred, four hydrogen ions are translocated across the cytoplasmic membrane), and thus conserves the redox energy in a proton gradient. This subunit may bind ubiquinone. The sequence is that of NADH-quinone oxidoreductase subunit H from Campylobacter jejuni (strain RM1221).